Here is a 658-residue protein sequence, read N- to C-terminus: Endoplasmic reticulum mannosyl-oligosaccharide 1,2-alpha-mannosidase (658 aa).

The Cytoplasmic portion of the chain corresponds to 1 to 50; it reads MYPPPAPPPAPHRDFISVTLSLGESYDNSKSRRRRSCWRKWKQLSRLQRN. A helical; Signal-anchor for type II membrane protein transmembrane segment spans residues 51–71; sequence VILFVLGFLILCGFLYSLHTA. At 72–658 the chain is on the lumenal side; it reads DQWKALSGRP…AHPLPIWAPA (587 aa). Serine 102 carries the post-translational modification Phosphoserine. The segment at 123–142 is disordered; the sequence is GPPHLQIRPPNTVSKDGMQD. Glutamate 289 functions as the Proton donor in the catalytic mechanism. Aspartate 422 is a catalytic residue. A disulfide bond links cysteine 486 and cysteine 515. Glutamate 529 functions as the Proton donor in the catalytic mechanism. Glutamate 558 is a catalytic residue. Threonine 647 is a Ca(2+) binding site.

Belongs to the glycosyl hydrolase 47 family. Ca(2+) is required as a cofactor.

The protein resides in the endoplasmic reticulum membrane. It catalyses the reaction N(4)-(alpha-D-Man-(1-&gt;2)-alpha-D-Man-(1-&gt;2)-alpha-D-Man-(1-&gt;3)-[alpha-D-Man-(1-&gt;2)-alpha-D-Man-(1-&gt;3)-[alpha-D-Man-(1-&gt;2)-alpha-D-Man-(1-&gt;6)]-alpha-D-Man-(1-&gt;6)]-beta-D-Man-(1-&gt;4)-beta-D-GlcNAc-(1-&gt;4)-beta-D-GlcNAc)-L-asparaginyl-[protein] (N-glucan mannose isomer 9A1,2,3B1,2,3) + 4 H2O = N(4)-(alpha-D-Man-(1-&gt;3)-[alpha-D-Man-(1-&gt;3)-[alpha-D-Man-(1-&gt;6)]-alpha-D-Man-(1-&gt;6)]-beta-D-Man-(1-&gt;4)-beta-D-GlcNAc-(1-&gt;4)-beta-D-GlcNAc)-L-asparaginyl-[protein] (N-glucan mannose isomer 5A1,2) + 4 beta-D-mannose. The catalysed reaction is N(4)-(alpha-D-Man-(1-&gt;2)-alpha-D-Man-(1-&gt;2)-alpha-D-Man-(1-&gt;3)-[alpha-D-Man-(1-&gt;3)-[alpha-D-Man-(1-&gt;2)-alpha-D-Man-(1-&gt;6)]-alpha-D-Man-(1-&gt;6)]-beta-D-Man-(1-&gt;4)-beta-D-GlcNAc-(1-&gt;4)-beta-D-GlcNAc)-L-asparaginyl-[protein] (N-glucan mannose isomer 8A1,2,3B1,3) + 3 H2O = N(4)-(alpha-D-Man-(1-&gt;3)-[alpha-D-Man-(1-&gt;3)-[alpha-D-Man-(1-&gt;6)]-alpha-D-Man-(1-&gt;6)]-beta-D-Man-(1-&gt;4)-beta-D-GlcNAc-(1-&gt;4)-beta-D-GlcNAc)-L-asparaginyl-[protein] (N-glucan mannose isomer 5A1,2) + 3 beta-D-mannose. Its pathway is protein modification; protein glycosylation. In terms of biological role, involved in glycoprotein quality control targeting of misfolded glycoproteins for degradation. It primarily trims a single alpha-1,2-linked mannose residue from Man(9)GlcNAc(2) to produce Man(8)GlcNAc(2), but at high enzyme concentrations, as found in the ER quality control compartment (ERQC), it further trims the carbohydrates to Man(5-6)GlcNAc(2). This is Endoplasmic reticulum mannosyl-oligosaccharide 1,2-alpha-mannosidase (Man1b1) from Mus musculus (Mouse).